The sequence spans 373 residues: Transmembrane protein adipocyte-associated 1 (373 aa).

Residues N11 and N23 are each glycosylated (N-linked (GlcNAc...) asparagine). The next 7 helical transmembrane spans lie at 48–68, 76–96, 123–143, 151–171, 192–212, 234–254, and 265–285; these read LLLLIPNVLFLIFLLWKLPSA, SSPIFITFYILVFVVALVGIA, FFLLAIELSVIILGLAFGHLE, VLAITTVLSLAYSVTQGTLEI, QFWLVSSCFFFLVYSLVVILP, ILALLNLLQGLGSVLLCFDII, and FLYFSFFAPLIYVAFLRGFFG. N361 carries an N-linked (GlcNAc...) asparagine glycan.

It belongs to the UPF0359 family. Ubiquitous, with higher levels in heart, placenta and kidney.

Its subcellular location is the membrane. The protein is Transmembrane protein adipocyte-associated 1 (TPRA1) of Homo sapiens (Human).